The primary structure comprises 835 residues: Ribosome-releasing factor 2, mitochondrial (835 aa).

A mitochondrion-targeting transit peptide spans 1-50 (MPWCNTRLRTCGASPKIFLRRVRCPVLLHNWTIGRVSSVSKMILRFLRSY). The 287-residue stretch at 57–343 (TRVRNIGIIA…AVVDYLPSPA (287 aa)) folds into the tr-type G domain. Residues 66–73 (AHIDAGKT), 131–135 (DTPGH), and 183–186 (NKMD) each bind GTP.

Belongs to the TRAFAC class translation factor GTPase superfamily. Classic translation factor GTPase family. EF-G/EF-2 subfamily.

The protein resides in the mitochondrion. Its function is as follows. Mitochondrial GTPase that mediates the disassembly of ribosomes from messenger RNA at the termination of mitochondrial protein biosynthesis. Not involved in the GTP-dependent ribosomal translocation step during translation elongation. The chain is Ribosome-releasing factor 2, mitochondrial from Eremothecium gossypii (strain ATCC 10895 / CBS 109.51 / FGSC 9923 / NRRL Y-1056) (Yeast).